The following is a 338-amino-acid chain: Lipoate-protein ligase A (338 aa).

Residues 29–216 enclose the BPL/LPL catalytic domain; that stretch reads PATQRVLFLW…AFFAHYGERV (188 aa). Residues R71, 76–79, and K134 contribute to the ATP site; that span reads GAVF. K134 provides a ligand contact to (R)-lipoate.

Belongs to the LplA family. Monomer.

The protein localises to the cytoplasm. It carries out the reaction L-lysyl-[lipoyl-carrier protein] + (R)-lipoate + ATP = N(6)-[(R)-lipoyl]-L-lysyl-[lipoyl-carrier protein] + AMP + diphosphate + H(+). It participates in protein modification; protein lipoylation via exogenous pathway; protein N(6)-(lipoyl)lysine from lipoate: step 1/2. Its pathway is protein modification; protein lipoylation via exogenous pathway; protein N(6)-(lipoyl)lysine from lipoate: step 2/2. In terms of biological role, catalyzes both the ATP-dependent activation of exogenously supplied lipoate to lipoyl-AMP and the transfer of the activated lipoyl onto the lipoyl domains of lipoate-dependent enzymes. This chain is Lipoate-protein ligase A, found in Escherichia coli O8 (strain IAI1).